The following is a 631-amino-acid chain: Clathrin interactor 1 (631 aa).

An ENTH domain is found at 24–157; it reads NVVMNYSEIE…QDDDRLREER (134 aa). Arginine 37 is an a 1,2-diacyl-sn-glycero-3-phospho-(1D-myo-inositol-4,5-bisphosphate) binding site. Residues 60-62 form an interaction with VTI1B region; the sequence is FMY. Residue arginine 75 coordinates a 1,2-diacyl-sn-glycero-3-phospho-(1D-myo-inositol-4,5-bisphosphate). Interaction with VTI1B stretches follow at residues 102-104 and 150-161; these read SER and DDRLREERKKAK. Phosphoserine occurs at positions 171, 174, 213, 218, 235, 253, and 307. Residues 227-339 form a disordered region; it reads FRRKDREDSP…SSGDLVDLFD (113 aa). A compositionally biased stretch (basic and acidic residues) spans 230-247; the sequence is KDREDSPERCSDSDEEKK. Residues 308–318 show a composition bias toward polar residues; sequence PDQNASTHTPQ. Threonine 316 is subject to Phosphothreonine. Residues 319-331 are compositionally biased toward low complexity; it reads SSAKPSVPSSKSS. Phosphoserine occurs at positions 320 and 630.

Belongs to the epsin family. As to quaternary structure, binds clathrin heavy chain and AP-2. Interacts with VTI1B. Interacts with GGA2 (via GAE domain). Interacts with AP1G1 (via GAE domain). Interacts with AP1G2 (via GAE domain).

Its subcellular location is the cytoplasm. The protein localises to the perinuclear region. It is found in the membrane. It localises to the cytoplasmic vesicle. The protein resides in the clathrin-coated vesicle. In terms of biological role, binds to membranes enriched in phosphatidylinositol 4,5-bisphosphate (PtdIns(4,5)P2). May have a role in transport via clathrin-coated vesicles from the trans-Golgi network to endosomes. Stimulates clathrin assembly. In Mus musculus (Mouse), this protein is Clathrin interactor 1 (Clint1).